The primary structure comprises 460 residues: DNA repair protein RadA (460 aa).

A C4-type zinc finger spans residues 11–28 (CNECGADYPRWQGQCSAC). 102 to 109 (GNPGAGKS) is a binding site for ATP. The RadA KNRFG motif motif lies at 258-262 (KNRFG). Residues 357-460 (DVFVNVVGGV…ADALSVFDDL (104 aa)) form a lon-protease-like region.

This sequence belongs to the RecA family. RadA subfamily.

Its function is as follows. DNA-dependent ATPase involved in processing of recombination intermediates, plays a role in repairing DNA breaks. Stimulates the branch migration of RecA-mediated strand transfer reactions, allowing the 3' invading strand to extend heteroduplex DNA faster. Binds ssDNA in the presence of ADP but not other nucleotides, has ATPase activity that is stimulated by ssDNA and various branched DNA structures, but inhibited by SSB. Does not have RecA's homology-searching function. In Salmonella typhimurium (strain LT2 / SGSC1412 / ATCC 700720), this protein is DNA repair protein RadA.